The following is a 190-amino-acid chain: Large ribosomal subunit protein uL5 (190 aa).

This sequence belongs to the universal ribosomal protein uL5 family. In terms of assembly, part of the 50S ribosomal subunit; part of the 5S rRNA/L5/L18/L25 subcomplex. Contacts the 5S rRNA and the P site tRNA. Forms a bridge to the 30S subunit in the 70S ribosome.

This is one of the proteins that bind and probably mediate the attachment of the 5S RNA into the large ribosomal subunit, where it forms part of the central protuberance. In the 70S ribosome it contacts protein S13 of the 30S subunit (bridge B1b), connecting the 2 subunits; this bridge is implicated in subunit movement. Contacts the P site tRNA; the 5S rRNA and some of its associated proteins might help stabilize positioning of ribosome-bound tRNAs. The sequence is that of Large ribosomal subunit protein uL5 from Bifidobacterium longum (strain DJO10A).